The sequence spans 333 residues: T-cell surface glycoprotein CD1b-2 (333 aa).

An N-terminal signal peptide occupies residues 1–20 (MLLLPLLLLGVILPGGDNED). The Extracellular portion of the chain corresponds to 21 to 302 (VFQGPTSFHL…LYWGHPTSIG (282 aa)). N-linked (GlcNAc...) asparagine glycosylation is found at Asn38, Asn75, and Asn146. Disulfide bonds link Cys120/Cys184, Cys149/Cys163, and Cys224/Cys279. The region spanning 185–295 (PRYLLGVLDA…LGDQDIILYW (111 aa)) is the Ig-like domain. Residues 303–323 (LILVAIIVPSLILSICLALWF) form a helical membrane-spanning segment. The Cytoplasmic portion of the chain corresponds to 324 to 333 (WRRWSYQNIL). The short motif at 329–332 (YQNI) is the Internalization signal element.

In terms of assembly, heterodimer with B2M (beta-2-microglobulin). Interacts with saposin C.

The protein resides in the cell membrane. The protein localises to the endosome membrane. It localises to the lysosome membrane. In terms of biological role, antigen-presenting protein that binds self and non-self lipid and glycolipid antigens and presents them to T-cell receptors on natural killer T-cells. This chain is T-cell surface glycoprotein CD1b-2, found in Ovis aries (Sheep).